Reading from the N-terminus, the 476-residue chain is Protein DETOXIFICATION 3 (476 aa).

The next 12 helical transmembrane spans lie at 35–55, 66–86, 117–137, 146–166, 185–205, 208–228, 260–280, 289–309, 331–351, 370–390, 402–422, and 433–453; these read AAPMAAVTIAQYLLPVISVMV, GVALATSFTNVSGFSILFGLA, IPICVLISVLWIYIEKLLISL, VAGSYALWLIPALFAHAFFIP, LTTLLFHIPVCWAFVYAFGLG, GAAMAISVSFWFYVVILSCYV, AAMVCLEWWLFELLILCSGLL, VLSICLTTASLHYVIPGGVAA, VLAGLCLWLVESAFFSTLLFT, VANLTPLLCLSFILDGFTAVL, IGALNNVVAYYLVGAPVGVYL, and LWCGVVVGSAVQAIILAFVTA.

It belongs to the multi antimicrobial extrusion (MATE) (TC 2.A.66.1) family.

It localises to the membrane. The protein is Protein DETOXIFICATION 3 of Arabidopsis thaliana (Mouse-ear cress).